The following is a 641-amino-acid chain: 1-deoxy-D-xylulose-5-phosphate synthase (641 aa).

Thiamine diphosphate-binding positions include H78 and 119 to 121 (AHS). D150 is a Mg(2+) binding site. Residues 151–152 (GA), N179, Y288, and E370 each bind thiamine diphosphate. N179 lines the Mg(2+) pocket.

The protein belongs to the transketolase family. DXPS subfamily. As to quaternary structure, homodimer. Requires Mg(2+) as cofactor. Thiamine diphosphate is required as a cofactor.

The enzyme catalyses D-glyceraldehyde 3-phosphate + pyruvate + H(+) = 1-deoxy-D-xylulose 5-phosphate + CO2. It participates in metabolic intermediate biosynthesis; 1-deoxy-D-xylulose 5-phosphate biosynthesis; 1-deoxy-D-xylulose 5-phosphate from D-glyceraldehyde 3-phosphate and pyruvate: step 1/1. Catalyzes the acyloin condensation reaction between C atoms 2 and 3 of pyruvate and glyceraldehyde 3-phosphate to yield 1-deoxy-D-xylulose-5-phosphate (DXP). The sequence is that of 1-deoxy-D-xylulose-5-phosphate synthase from Azorhizobium caulinodans (strain ATCC 43989 / DSM 5975 / JCM 20966 / LMG 6465 / NBRC 14845 / NCIMB 13405 / ORS 571).